A 442-amino-acid polypeptide reads, in one-letter code: Serine protease AprX (442 aa).

One can recognise a Peptidase S8 domain in the interval 122-439 (KALLDTATEA…AGAVNAENSV (318 aa)). Catalysis depends on charge relay system residues D155 and H187. The segment at 318–337 (DNNTASSDDDTVASFSSRGP) is disordered. S384 (charge relay system) is an active-site residue. A disordered region spans residues 423 to 442 (EDPNIYGAGAVNAENSVPGQ).

The protein belongs to the peptidase S8 family.

It localises to the cytoplasm. Is completely inhibited by phenylmethanesulphonylfluoride (PMSF) in vitro. In terms of biological role, displays serine protease activity. Seems to have a broad substrate specificity. In Bacillus subtilis (strain 168), this protein is Serine protease AprX (aprX).